The primary structure comprises 123 residues: uncharacterized protein (123 aa).

A helical membrane pass occupies residues 5 to 25; sequence GTLVIIFAIVLILCIMLLFFY. The interval 33–54 is disordered; it reads PGVLPPPIPPPTPPPPKKKYDH. Residues 35 to 47 show a composition bias toward pro residues; sequence VLPPPIPPPTPPP.

It belongs to the asfivirus CP123L family.

It localises to the host membrane. The protein resides in the virion. This is an uncharacterized protein from African swine fever virus (isolate Warthog/Namibia/Wart80/1980) (ASFV).